Consider the following 115-residue polypeptide: Protein V2 (115 aa).

The protein belongs to the geminiviridae protein AV2/V2 family. Interacts with host SGS3.

Its subcellular location is the host cytoplasm. It localises to the host perinuclear region. Functionally, through its interaction with host SGS3, acts as a suppressor of RNA-mediated gene silencing, also known as post-transcriptional gene silencing (PTGS), a mechanism of plant viral defense that limits the accumulation of viral RNAs. The chain is Protein V2 from Cynanchum acutum (Little mallow).